Reading from the N-terminus, the 79-residue chain is Major outer membrane lipoprotein Lpp 2 (79 aa).

The signal sequence occupies residues 1–21 (MNRTNKLILGAVVLGSALLAG). The N-palmitoyl cysteine moiety is linked to residue Cys22. Cys22 carries the S-diacylglycerol cysteine lipid modification. 2 repeats span residues 25–35 (NAKIDQLSSDV) and 39–49 (SAKVDQLSNDV). Positions 28-76 (IDQLSSDVQTLSAKVDQLSNDVNAMRSDIQAAKDDAARANQRLDNKVSR) form a coiled coil. Residues 60 to 79 (KDDAARANQRLDNKVSRVRK) form a disordered region. Lys79 carries the N6-murein peptidoglycan lysine modification.

The protein belongs to the Lpp family. Homotrimer.

The protein localises to the cell outer membrane. It localises to the secreted. It is found in the cell wall. Functionally, a highly abundant outer membrane lipoprotein that controls the distance between the inner and outer membranes. The only protein known to be covalently linked to the peptidoglycan network (PGN). Also non-covalently binds the PGN. The link between the cell outer membrane and PGN contributes to maintenance of the structural and functional integrity of the cell envelope, and maintains the correct distance between the PGN and the outer membrane. The polypeptide is Major outer membrane lipoprotein Lpp 2 (Salmonella paratyphi A (strain ATCC 9150 / SARB42)).